A 239-amino-acid chain; its full sequence is Tetraspanin-9 (239 aa).

The Cytoplasmic segment spans residues 1–13; sequence MARGCLCCLKYMM. The helical transmembrane segment at 14–34 threads the bilayer; sequence FLFNLIFWLCGCGLLGVGIWL. Topologically, residues 35 to 55 are extracellular; it reads SVSQGNFATFSPSFPSLSAAN. Residues 56–76 traverse the membrane as a helical segment; the sequence is LVIAIGTIVMVTGFLGCLGAI. At 77-85 the chain is on the cytoplasmic side; it reads KENKCLLLS. The helical transmembrane segment at 86 to 106 threads the bilayer; the sequence is FFIILLIILLAELILLILFFV. Residues 107–203 lie on the Extracellular side of the membrane; it reads YMDKVNENAK…VKMWFDDNKH (97 aa). Asn180 is a glycosylation site (N-linked (GlcNAc...) asparagine). The helical transmembrane segment at 204-224 threads the bilayer; that stretch reads VLGTIGMCILIIQILGMAFSM. Residues 225–239 are Cytoplasmic-facing; sequence TLFQQIHRTGKKYDA.

This sequence belongs to the tetraspanin (TM4SF) family.

Its subcellular location is the membrane. The sequence is that of Tetraspanin-9 (tspan9) from Xenopus tropicalis (Western clawed frog).